Reading from the N-terminus, the 504-residue chain is Glycerol kinase (504 aa).

Position 14 (Thr14) interacts with ADP. Residues Thr14, Thr15, and Ser16 each coordinate ATP. Thr14 contacts sn-glycerol 3-phosphate. Arg18 is an ADP binding site. Residues Arg84, Glu85, Tyr136, and Asp246 each coordinate sn-glycerol 3-phosphate. Arg84, Glu85, Tyr136, Asp246, and Gln247 together coordinate glycerol. ADP-binding residues include Thr268 and Gly311. Positions 268, 311, 315, and 412 each coordinate ATP. ADP-binding residues include Gly412 and Asn416.

The protein belongs to the FGGY kinase family.

It catalyses the reaction glycerol + ATP = sn-glycerol 3-phosphate + ADP + H(+). It functions in the pathway polyol metabolism; glycerol degradation via glycerol kinase pathway; sn-glycerol 3-phosphate from glycerol: step 1/1. Its activity is regulated as follows. Inhibited by fructose 1,6-bisphosphate (FBP). Functionally, key enzyme in the regulation of glycerol uptake and metabolism. Catalyzes the phosphorylation of glycerol to yield sn-glycerol 3-phosphate. The sequence is that of Glycerol kinase from Aliivibrio salmonicida (strain LFI1238) (Vibrio salmonicida (strain LFI1238)).